Here is a 239-residue protein sequence, read N- to C-terminus: Purine nucleoside phosphorylase DeoD-type (239 aa).

Histidine 5 serves as a coordination point for a purine D-ribonucleoside. Phosphate contacts are provided by residues glycine 21, arginine 25, arginine 44, and 89–92 (RVGS). A purine D-ribonucleoside-binding positions include 180-182 (EME) and 204-205 (SD). Residue aspartate 205 is the Proton donor of the active site.

The protein belongs to the PNP/UDP phosphorylase family. As to quaternary structure, homohexamer; trimer of homodimers.

The enzyme catalyses a purine D-ribonucleoside + phosphate = a purine nucleobase + alpha-D-ribose 1-phosphate. It carries out the reaction a purine 2'-deoxy-D-ribonucleoside + phosphate = a purine nucleobase + 2-deoxy-alpha-D-ribose 1-phosphate. Catalyzes the reversible phosphorolytic breakdown of the N-glycosidic bond in the beta-(deoxy)ribonucleoside molecules, with the formation of the corresponding free purine bases and pentose-1-phosphate. This is Purine nucleoside phosphorylase DeoD-type from Klebsiella pneumoniae.